A 180-amino-acid polypeptide reads, in one-letter code: Large ribosomal subunit protein uL6 (180 aa).

Belongs to the universal ribosomal protein uL6 family. In terms of assembly, part of the 50S ribosomal subunit.

In terms of biological role, this protein binds to the 23S rRNA, and is important in its secondary structure. It is located near the subunit interface in the base of the L7/L12 stalk, and near the tRNA binding site of the peptidyltransferase center. This chain is Large ribosomal subunit protein uL6, found in Borrelia duttonii (strain Ly).